Here is a 161-residue protein sequence, read N- to C-terminus: Lipoprotein signal peptidase (161 aa).

3 helical membrane-spanning segments follow: residues 9 to 29 (ISLLMTFIVLVFDQVSKWLIT), 63 to 83 (KMLFFYIITIIILIVLVIFYI), and 88 to 108 (FNLFMQVAISLLFAGALGNFI). Catalysis depends on residues Asp-118 and Asp-136. The chain crosses the membrane as a helical span at residues 131–151 (IFNIADSSLTIGVIFVIITLI).

Belongs to the peptidase A8 family.

It is found in the cell membrane. It catalyses the reaction Release of signal peptides from bacterial membrane prolipoproteins. Hydrolyzes -Xaa-Yaa-Zaa-|-(S,diacylglyceryl)Cys-, in which Xaa is hydrophobic (preferably Leu), and Yaa (Ala or Ser) and Zaa (Gly or Ala) have small, neutral side chains.. Its pathway is protein modification; lipoprotein biosynthesis (signal peptide cleavage). In terms of biological role, this protein specifically catalyzes the removal of signal peptides from prolipoproteins. The sequence is that of Lipoprotein signal peptidase from Staphylococcus epidermidis (strain ATCC 35984 / DSM 28319 / BCRC 17069 / CCUG 31568 / BM 3577 / RP62A).